Consider the following 3142-residue polypeptide: Huntingtin (3142 aa).

The sufficient for interaction with TPR stretch occupies residues 3 to 13 (TLEKLMKAFES). N6-acetyllysine is present on K9. A disordered region spans residues 14 to 85 (LKSFQQQQQQ…PGPAVAEEPL (72 aa)). Residues 18–37 (QQQQQQQQQQQQQQQQQQQQ) are compositionally biased toward low complexity. The segment covering 38–78 (QPPPPPPPPPPPQLPQPPPQAQPLLPQPQPPPPPPPPPPGP) has biased composition (pro residues). Residues K176 and K234 each carry the N6-acetyllysine modification. 3 HEAT repeats span residues 204-241 (PYLVNLLPCLTRTSKRPEESVQETLAAAVPKIMASFGN), 246-283 (NEIKVLLKAFIANLKSSSPTIRRTAAGSAVSICQHSRR), and 316-360 (LTLR…VYEL). K343 carries the N6-acetyllysine modification. Phosphoserine is present on residues S411, S417, S419, and S432. The residue at position 442 (K442) is an N6-acetyllysine. The interval 447 to 469 (EEEALEDDSESRSDVSSSALTAS) is disordered. The interval 491–502 (GHDIITEQPRSQ) is interaction with ZDHHC17. The segment at 517–583 (LTSSATDGDE…TPSDSSEIVL (67 aa)) is disordered. A compositionally biased stretch (low complexity) spans 531-545 (SHSSSQVSAVPSDPA). Polar residues predominate over residues 550 to 579 (DGTQASSPISDSSQTTTEGPDSAVTPSDSS). G551 is lipidated: N-myristoyl glycine. Phosphoserine occurs at positions 640 and 643. HEAT repeat units lie at residues 802–839 (FSLADCIPLLRKTLKDESSVTCKLACTAVRNCVMSLCS) and 902–940 (KLQERVLNNVVIHLLGDEDPRVRHVAAASLIRLVPKLFY). The tract at residues 1176–1225 (PSLSPIRRKGKEKEPGEQASVPLSPKKGSEASAASRQSDTSGPVTTSKSS) is disordered. S1179 and S1199 each carry phosphoserine; by CDK5. Polar residues predominate over residues 1207 to 1225 (SAASRQSDTSGPVTTSKSS). Phosphoserine is present on residues S1870 and S1874. The segment at 2330–2351 (ERRTNTPKAISEEEEEVDPNTQ) is disordered. Positions 2395-2404 (IIISLARLPL) match the Nuclear export signal motif. The disordered stretch occupies residues 2633–2662 (EEEWDEEEEEEADAPAPSSPPTSPVNSRKH). Positions 2634–2645 (EEWDEEEEEEAD) are enriched in acidic residues.

It belongs to the huntingtin family. Interacts with PFN1. Interacts through its N-terminus with PRPF40A. Interacts with PQBP1. Interacts with SETD2. Interacts with SH3GLB1. Interacts with SYVN. Interacts with TPR; the interaction is inhibited by forms of Huntingtin with expanded polyglutamine stretch. Interacts with ZDHHC13 (via ANK repeats). Interacts with ZDHHC17 (via ANK repeats). Interacts with F8A1/F8A2/F8A3. Found in a complex with F8A1/F8A2/F8A3, HTT and RAB5A; mediates the recruitment of HTT by RAB5A. Cleaved by caspases downstream of the polyglutamine stretch. The resulting N-terminal fragments are cytotoxic and provokes apoptosis. In terms of processing, forms with expanded polyglutamine expansion are specifically ubiquitinated by SYVN1, which promotes their proteasomal degradation. Post-translationally, phosphorylation at Ser-1179 and Ser-1199 by CDK5 in response to DNA damage in nuclei of neurons protects neurons against polyglutamine expansion as well as DNA damage mediated toxicity. Myristoylated at Gly-551, following proteolytic cleavage at Asp-550. Expressed in the brain cortex (at protein level). Widely expressed with the highest level of expression in the brain (nerve fibers, varicosities, and nerve endings). In the brain, the regions where it can be mainly found are the cerebellar cortex, the neocortex, the striatum, and the hippocampal formation.

The protein localises to the cytoplasm. It is found in the nucleus. The protein resides in the early endosome. It localises to the cytoplasmic vesicle. Its subcellular location is the autophagosome. Its function is as follows. May play a role in microtubule-mediated transport or vesicle function. Functionally, promotes the formation of autophagic vesicles. This Homo sapiens (Human) protein is Huntingtin (HTT).